Consider the following 186-residue polypeptide: UPF0301 protein NTHI0415 (186 aa).

Belongs to the UPF0301 (AlgH) family.

The sequence is that of UPF0301 protein NTHI0415 from Haemophilus influenzae (strain 86-028NP).